The primary structure comprises 31 residues: Mycofactocin precursor peptide (31 aa).

This sequence belongs to the mycofactocin precursor peptide family. In terms of processing, the post-translational modifications that lead to mycofactocin involve oxidative decarboxylation of the C-terminal tyrosine residue catalyzed by MftC, introduction of a tyramine-valine cross-link, removal of the modified C-terminal dipeptide by MftE. The released dipeptide then undergoes oxidative deamination by MftD, glycosylation by MftF and methylation by an unknown enzyme.

Its function is as follows. Precursor peptide that leads to mycofactocin (MFT) after extensive post-translational modifications by enzymes encoded by adjacent genes. Mycofactocin acts as a redox cofactor of nicotinamide-dependent oxidoreductases encoded in the same locus. Is required for the in vivo ethanol assimilation in M.smegmatis. The polypeptide is Mycofactocin precursor peptide (Mycolicibacterium smegmatis (strain ATCC 700084 / mc(2)155) (Mycobacterium smegmatis)).